Reading from the N-terminus, the 156-residue chain is MSWSKVKYFFFDTPEEKEAAQYSYEKEQTDMKKQQDPPEQQDVTFPKAQPKQNVVSIETAKQSSKVVLLEPRTYSEAQGIADHLKGRRAVVINLQRMSTDQAVRIVDFLSGTVYAIGGDIQKIGPKTFMCTPENVDIVGAISELFGEEEDTNIKRW.

Basic and acidic residues predominate over residues 23 to 36 (SYEKEQTDMKKQQD). The segment at 23–50 (SYEKEQTDMKKQQDPPEQQDVTFPKAQP) is disordered.

The protein belongs to the SepF family. As to quaternary structure, homodimer. Interacts with FtsZ.

It is found in the cytoplasm. Functionally, cell division protein that is part of the divisome complex and is recruited early to the Z-ring. Probably stimulates Z-ring formation, perhaps through the cross-linking of FtsZ protofilaments. Its function overlaps with FtsA. This is Cell division protein SepF from Bacillus thuringiensis (strain Al Hakam).